Reading from the N-terminus, the 165-residue chain is NADPH-dependent 7-cyano-7-deazaguanine reductase (165 aa).

The active-site Thioimide intermediate is the cysteine 56. Aspartate 63 acts as the Proton donor in catalysis. Residues 78–80 (VES) and 97–98 (HE) each bind substrate.

This sequence belongs to the GTP cyclohydrolase I family. QueF type 1 subfamily.

It is found in the cytoplasm. It catalyses the reaction 7-aminomethyl-7-carbaguanine + 2 NADP(+) = 7-cyano-7-deazaguanine + 2 NADPH + 3 H(+). It functions in the pathway tRNA modification; tRNA-queuosine biosynthesis. Its activity is regulated as follows. Is totally inhibited by 4-aminobenzylcyanide in vitro. Catalyzes the NADPH-dependent reduction of 7-cyano-7-deazaguanine (preQ0) to 7-aminomethyl-7-deazaguanine (preQ1), a late step in the queuosine pathway. Is highly specific for its natural substrate preQ0, since it cannot use various aliphatic, aromatic and heterocyclic nitriles, although it can reduce the substrate analog 5-cyanopyrrolo[2,3-d]pyrimidin-4-one with lesser efficiency. This Geobacillus kaustophilus (strain HTA426) protein is NADPH-dependent 7-cyano-7-deazaguanine reductase.